We begin with the raw amino-acid sequence, 772 residues long: Subtilisin-like protease SBT5.3 (772 aa).

Positions 1–25 (MKLTHNFSFLLLLLLVHMSSKHILA) are cleaved as a signal peptide. In terms of domain architecture, Inhibitor I9 spans 31-116 (SYVVYFGAHS…VFPNKALKLH (86 aa)). The region spanning 120–628 (SWDFLGLEHN…AGHVQPNLAV (509 aa)) is the Peptidase S8 domain. Asp153 serves as the catalytic Charge relay system. An N-linked (GlcNAc...) asparagine glycan is attached at Asn211. The active-site Charge relay system is the His223. N-linked (GlcNAc...) asparagine glycans are attached at residues Asn246, Asn306, and Asn396. A PA domain is found at 398–480 (SALDAQLCKL…KDSFAVSRYI (83 aa)). Residue Ser561 is the Charge relay system of the active site. 5 N-linked (GlcNAc...) asparagine glycosylation sites follow: Asn606, Asn651, Asn662, Asn684, and Asn725.

Belongs to the peptidase S8 family. As to expression, expressed specifically at sites of lateral root emergence.

It localises to the secreted. The protein resides in the cell wall. Serine protease. Has a substrate preference for the hydrophobic residues Phe and Ala and the basic residue Asp in the P1 position, and for Asp, Leu or Ala in the P1' position. May play a role in the degradation of structural proteins in the extracellular matrix of cells located above sites of lateral root formation and thus facilitate lateral root emergence. The polypeptide is Subtilisin-like protease SBT5.3 (AIR3) (Arabidopsis thaliana (Mouse-ear cress)).